A 145-amino-acid polypeptide reads, in one-letter code: Protein SprT-like (145 aa).

The SprT-like domain occupies 5-140; that stretch reads DYVREVSLAD…ACGRCHGRLI (136 aa). Histidine 64 contributes to the Zn(2+) binding site. Glutamate 65 is an active-site residue. Histidine 68 provides a ligand contact to Zn(2+).

This sequence belongs to the SprT family. Zn(2+) is required as a cofactor.

It localises to the cytoplasm. The protein is Protein SprT-like of Streptococcus equi subsp. equi (strain 4047).